Consider the following 172-residue polypeptide: Probable phosphatase YqeG (172 aa).

Its function is as follows. Has low dephosphorylation activity on GMP and glucose-6-phosphate. The sequence is that of Probable phosphatase YqeG (yqeG) from Bacillus subtilis (strain 168).